Here is a 272-residue protein sequence, read N- to C-terminus: Phosphatidylglycerol--prolipoprotein diacylglyceryl transferase (272 aa).

Transmembrane regions (helical) follow at residues 21-41, 60-80, 101-121, and 131-151; these read IAVHWYGIMYALALLSAIFVA, YIWWAEIGVILGARLGYVLFY, GVYAGISGMSYHGAFFGFIIA, and VSFWFITDIAVLGVSAAYIFG. Arginine 152 is an a 1,2-diacyl-sn-glycero-3-phospho-(1'-sn-glycerol) binding site. 3 helical membrane passes run 181–201, 209–229, and 244–264; these read PSQIYEAILEGLFVFLILAFY, GQLALMYGILYAIARIIAEFF, and LTMGILQSLIILIICVGFYVV.

Belongs to the Lgt family.

Its subcellular location is the cell inner membrane. It carries out the reaction L-cysteinyl-[prolipoprotein] + a 1,2-diacyl-sn-glycero-3-phospho-(1'-sn-glycerol) = an S-1,2-diacyl-sn-glyceryl-L-cysteinyl-[prolipoprotein] + sn-glycerol 1-phosphate + H(+). The protein operates within protein modification; lipoprotein biosynthesis (diacylglyceryl transfer). Catalyzes the transfer of the diacylglyceryl group from phosphatidylglycerol to the sulfhydryl group of the N-terminal cysteine of a prolipoprotein, the first step in the formation of mature lipoproteins. This chain is Phosphatidylglycerol--prolipoprotein diacylglyceryl transferase, found in Aliarcobacter butzleri (strain RM4018) (Arcobacter butzleri).